Consider the following 828-residue polypeptide: Vacuolar transporter chaperone complex subunit 2 (828 aa).

Residues 1–146 (MLFGVKLANE…PKYPSVKSLL (146 aa)) form the SPX domain. The Cytoplasmic segment spans residues 1 to 693 (MLFGVKLANE…EAKVWLANER (693 aa)). Positions 127 to 134 (KIVKKHDK) are important for inositol polyphosphate binding. Residues Ser-182, Ser-187, Ser-196, Ser-264, Ser-583, Ser-615, and Ser-616 each carry the phosphoserine modification. Residues 580–636 (RRLSNLKEPQHQAAVPVSQEENERITSQGDLEADGSSDEETEQEPHSKRSKKVRRRK) form a disordered region. Over residues 610–621 (LEADGSSDEETE) the composition is skewed to acidic residues. Thr-620 carries the post-translational modification Phosphothreonine. Residue Ser-626 is modified to Phosphoserine. The segment covering 627–636 (KRSKKVRRRK) has biased composition (basic residues). Ser-657 bears the Phosphoserine mark. Residues 694-716 (TFNRWLSVTSLLSVLTFSIYNSV) traverse the membrane as a helical segment. Residues 717 to 727 (KKAEYPTLANY) lie on the Vacuolar side of the membrane. Residues 728 to 748 (MAYVYFGLTIFCALWSYSIYM) traverse the membrane as a helical segment. Over 749–766 (KRVDIIQQRSGQHLDAPL) the chain is Cytoplasmic. The chain crosses the membrane as a helical span at residues 767–787 (GPVLVSIVLFVTLVVNFVMAF). The Vacuolar segment spans residues 788 to 828 (RNAAKSRQELQIQNLEVPERIPEVLRPLQNYLFKLMGPSSD).

It belongs to the VTC2/3 family. In terms of assembly, the VTC core complex is an integral membrane heterooligomer composed of the catalytic subunit VTC4 and the accessory subunits VTC1, VTC2 and VTC3. The complex exists in 2 different sub-complexes: VTC1-VTC2-VCT4 and VCT1-VTC3-VTC4. The VCT1-VTC3-VTC4 subcomplex is mostly found on the vacuolar membrane. The VTC1-VTC2-VCT4 subcomplex is observed in the cell periphery, probably ER and nuclear envelope, but localizes to the vacuole under phosphate starvation. Each subunit contains 3 transmembrane helices. VTC1 is a small membrane protein without hydrophilic domain. VTC2, VTC3 and VTC4 are related and have 2 hydrophilic domains that face the cytosol, an N-terminal SPX domain and the central core domain. The central core in VTC4 is the catalytic domain, with the essential catalytic lysine replaced by isoleucine and leucine in VTC2 and VTC3, respectively. The core complex associates with the accessory subunit VTC5. The complex interacts with the v-SNARE NYV1 and with the V(0) subunit of V-ATPase VPH1.

It localises to the vacuole membrane. Its subcellular location is the cytoplasm. The protein resides in the cell cortex. It is found in the endoplasmic reticulum membrane. The protein localises to the cytoplasmic vesicle. It localises to the autophagosome membrane. Its function is as follows. Accessory subunit of the vacuolar transporter chaperone (VTC) complex. The VTC complex acts as a vacuolar polyphosphate polymerase that catalyzes the synthesis of inorganic polyphosphate (polyP) via transfer of phosphate from ATP to a growing polyP chain, releasing ADP. VTC exposes its catalytic domain VTC4 to the cytosol, where the growing polyP chain winds through a tunnel-shaped pocket, integrating cytoplasmic polymer synthesis with polyP membrane translocation. The VTC complex carries 9 vacuolar transmembrane domains, which are likely to constitute the translocation channel into the organelle lumen. PolyP synthesis is tightly coupled to its transport into the vacuole lumen, in order to avoid otherwise toxic intermediates in the cytosol, and it depends on the proton gradient across the membrane, formed by V-ATPase. Binds inositol hexakisphosphate (Ins6P) and similar inositol polyphosphates, such as 5-diphospho-inositol pentakisphosphate (5-InsP7); these are important intracellular signaling molecules. Inositol polyphosphate binding promotes vacuolar polyphosphate synthesis. The VTC complex also plays a role in vacuolar membrane fusion. Required for SEC18/NSF activity in SNARE priming, membrane binding of LMA1 and V(0) trans-complex formation. This chain is Vacuolar transporter chaperone complex subunit 2, found in Saccharomyces cerevisiae (strain ATCC 204508 / S288c) (Baker's yeast).